A 411-amino-acid polypeptide reads, in one-letter code: Acetylornithine aminotransferase, mitochondrial (411 aa).

At Lys262 the chain carries N6-(pyridoxal phosphate)lysine.

The protein belongs to the class-III pyridoxal-phosphate-dependent aminotransferase family. Requires pyridoxal 5'-phosphate as cofactor.

It localises to the mitochondrion matrix. The catalysed reaction is N(2)-acetyl-L-ornithine + 2-oxoglutarate = N-acetyl-L-glutamate 5-semialdehyde + L-glutamate. It participates in amino-acid biosynthesis; L-arginine biosynthesis; N(2)-acetyl-L-ornithine from L-glutamate: step 4/4. This Yarrowia lipolytica (strain CLIB 122 / E 150) (Yeast) protein is Acetylornithine aminotransferase, mitochondrial (ARG8).